We begin with the raw amino-acid sequence, 109 residues long: Iron-sulfur cluster assembly protein CyaY (109 aa).

The protein belongs to the frataxin family.

Its function is as follows. Involved in iron-sulfur (Fe-S) cluster assembly. May act as a regulator of Fe-S biogenesis. The chain is Iron-sulfur cluster assembly protein CyaY from Shewanella baltica (strain OS155 / ATCC BAA-1091).